A 682-amino-acid polypeptide reads, in one-letter code: Potassium-transporting ATPase ATP-binding subunit (682 aa).

4 consecutive transmembrane segments (helical) span residues 34-54, 58-78, 219-239, and 254-274; these read PVMF…LAMV, IAGS…TVLF, IALT…TATL, and VLVA…LSAI. Residue D307 is the 4-aspartylphosphate intermediate of the active site. Residues D344, E348, 377-384, and K395 contribute to the ATP site; that span reads FTAQSRMS. Positions 518 and 522 each coordinate Mg(2+). Transmembrane regions (helical) follow at residues 588 to 608, 616 to 636, and 662 to 682; these read FAII…LNVM, AILS…PLAL, and LVVP…LGLA.

Belongs to the cation transport ATPase (P-type) (TC 3.A.3) family. Type IA subfamily. In terms of assembly, the system is composed of three essential subunits: KdpA, KdpB and KdpC.

Its subcellular location is the cell inner membrane. The catalysed reaction is K(+)(out) + ATP + H2O = K(+)(in) + ADP + phosphate + H(+). In terms of biological role, part of the high-affinity ATP-driven potassium transport (or Kdp) system, which catalyzes the hydrolysis of ATP coupled with the electrogenic transport of potassium into the cytoplasm. This subunit is responsible for energy coupling to the transport system and for the release of the potassium ions to the cytoplasm. The chain is Potassium-transporting ATPase ATP-binding subunit from Salmonella typhimurium (strain LT2 / SGSC1412 / ATCC 700720).